Reading from the N-terminus, the 77-residue chain is ATP synthase subunit c (77 aa).

Helical transmembrane passes span 13–33 (IATV…GIVA) and 55–75 (FLGI…YFIF).

This sequence belongs to the ATPase C chain family. F-type ATPases have 2 components, F(1) - the catalytic core - and F(0) - the membrane proton channel. F(1) has five subunits: alpha(3), beta(3), gamma(1), delta(1), epsilon(1). F(0) has three main subunits: a(1), b(2) and c(10-14). The alpha and beta chains form an alternating ring which encloses part of the gamma chain. F(1) is attached to F(0) by a central stalk formed by the gamma and epsilon chains, while a peripheral stalk is formed by the delta and b chains.

The protein localises to the cell membrane. Functionally, f(1)F(0) ATP synthase produces ATP from ADP in the presence of a proton or sodium gradient. F-type ATPases consist of two structural domains, F(1) containing the extramembraneous catalytic core and F(0) containing the membrane proton channel, linked together by a central stalk and a peripheral stalk. During catalysis, ATP synthesis in the catalytic domain of F(1) is coupled via a rotary mechanism of the central stalk subunits to proton translocation. Key component of the F(0) channel; it plays a direct role in translocation across the membrane. A homomeric c-ring of between 10-14 subunits forms the central stalk rotor element with the F(1) delta and epsilon subunits. The chain is ATP synthase subunit c from Clavibacter sepedonicus (Clavibacter michiganensis subsp. sepedonicus).